Reading from the N-terminus, the 509-residue chain is Phosphoenolpyruvate carboxylase (509 aa).

This sequence belongs to the PEPCase type 2 family. As to quaternary structure, homotetramer. Mg(2+) is required as a cofactor.

The catalysed reaction is oxaloacetate + phosphate = phosphoenolpyruvate + hydrogencarbonate. Catalyzes the irreversible beta-carboxylation of phosphoenolpyruvate (PEP) to form oxaloacetate (OAA), a four-carbon dicarboxylic acid source for the tricarboxylic acid cycle. The chain is Phosphoenolpyruvate carboxylase from Metallosphaera sedula (strain ATCC 51363 / DSM 5348 / JCM 9185 / NBRC 15509 / TH2).